The sequence spans 242 residues: Large ribosomal subunit protein uL1 (242 aa).

Belongs to the universal ribosomal protein uL1 family. As to quaternary structure, part of the 50S ribosomal subunit.

In terms of biological role, binds directly to 23S rRNA. The L1 stalk is quite mobile in the ribosome, and is involved in E site tRNA release. Protein L1 is also a translational repressor protein, it controls the translation of the L11 operon by binding to its mRNA. This Sulfurihydrogenibium sp. (strain YO3AOP1) protein is Large ribosomal subunit protein uL1.